We begin with the raw amino-acid sequence, 282 residues long: Acetyl-coenzyme A carboxylase carboxyl transferase subunit beta (282 aa).

In terms of domain architecture, CoA carboxyltransferase N-terminal spans 25–282 (LWTKCVSCGE…SSILTMLYRP (258 aa)). Residues C29, C32, C48, and C51 each coordinate Zn(2+). A C4-type zinc finger spans residues 29–51 (CVSCGETIYTKDIENNLNVCPKC).

It belongs to the AccD/PCCB family. In terms of assembly, acetyl-CoA carboxylase is a heterohexamer composed of biotin carboxyl carrier protein (AccB), biotin carboxylase (AccC) and two subunits each of ACCase subunit alpha (AccA) and ACCase subunit beta (AccD). Zn(2+) serves as cofactor.

The protein resides in the cytoplasm. It carries out the reaction N(6)-carboxybiotinyl-L-lysyl-[protein] + acetyl-CoA = N(6)-biotinyl-L-lysyl-[protein] + malonyl-CoA. It participates in lipid metabolism; malonyl-CoA biosynthesis; malonyl-CoA from acetyl-CoA: step 1/1. Its function is as follows. Component of the acetyl coenzyme A carboxylase (ACC) complex. Biotin carboxylase (BC) catalyzes the carboxylation of biotin on its carrier protein (BCCP) and then the CO(2) group is transferred by the transcarboxylase to acetyl-CoA to form malonyl-CoA. This is Acetyl-coenzyme A carboxylase carboxyl transferase subunit beta from Citrifermentans bemidjiense (strain ATCC BAA-1014 / DSM 16622 / JCM 12645 / Bem) (Geobacter bemidjiensis).